The sequence spans 273 residues: HMP-PP phosphatase (273 aa).

The active-site Nucleophile is D8. Mg(2+) contacts are provided by D8, D10, and D212.

Belongs to the HAD-like hydrolase superfamily. Cof family. Requires Mg(2+) as cofactor.

It catalyses the reaction 4-amino-2-methyl-5-(diphosphooxymethyl)pyrimidine + H2O = 4-amino-2-methyl-5-(phosphooxymethyl)pyrimidine + phosphate + H(+). Its function is as follows. Catalyzes the hydrolysis of 4-amino-2-methyl-5-hydroxymethylpyrimidine pyrophosphate (HMP-PP) to 4-amino-2-methyl-5-hydroxymethylpyrimidine phosphate (HMP-P). This chain is HMP-PP phosphatase, found in Yersinia pseudotuberculosis serotype I (strain IP32953).